The primary structure comprises 99 residues: LDVLLGGDDGSLAFIPGNFSVSAGEKITFKNNAGFPHNVVFDEDEIPAGVDASKISMAEEDLLNAAGETYSVTLSEKGTYTFYCAPHQGAGMVGKVTVN.

One can recognise a Plastocyanin-like domain in the interval 1–99 (LDVLLGGDDG…AGMVGKVTVN (99 aa)). The Cu cation site is built by histidine 37, cysteine 84, histidine 87, and methionine 92.

This sequence belongs to the plastocyanin family. Requires Cu(2+) as cofactor.

The protein resides in the plastid. It is found in the chloroplast thylakoid membrane. Functionally, participates in electron transfer between P700 and the cytochrome b6-f complex in photosystem I. The protein is Plastocyanin (PETE) of Solanum tuberosum (Potato).